The chain runs to 400 residues: Protein screw (400 aa).

Residues 1-16 form the signal peptide; sequence MLNVFFLTSLFYAASA. A propeptide spanning residues 17-277 is cleaved from the precursor; that stretch reads TTYVTTNNHI…RFKRDLEKRR (261 aa). N-linked (GlcNAc...) asparagine glycans are attached at residues Asn-165, Asn-189, Asn-201, Asn-304, and Asn-342. 3 cysteine pairs are disulfide-bonded: Cys-300–Cys-365, Cys-329–Cys-397, and Cys-333–Cys-399.

It belongs to the TGF-beta family. In terms of assembly, heterodimers of scw/dpp are the active subunit, dpp/dpp homodimers elicit a basal response and scw/scw homodimers alone are ineffective in specifying a dorsal pattern. In terms of tissue distribution, ubiquitously expressed during early stages of embryogenesis, but the effect on development appears graded and is restricted to the dorsal side of the embryo.

The protein localises to the secreted. Functionally, part of the signal that specifies dorsal cell fates in the embryo. Acts together with dpp. In Drosophila melanogaster (Fruit fly), this protein is Protein screw (scw).